The sequence spans 149 residues: 3-dehydroquinate dehydratase (149 aa).

Tyrosine 26 (proton acceptor) is an active-site residue. Substrate is bound by residues asparagine 78, histidine 84, and aspartate 91. The active-site Proton donor is histidine 104. Substrate-binding positions include 105-106 and arginine 115; that span reads LS.

This sequence belongs to the type-II 3-dehydroquinase family. In terms of assembly, homododecamer.

The enzyme catalyses 3-dehydroquinate = 3-dehydroshikimate + H2O. Its pathway is metabolic intermediate biosynthesis; chorismate biosynthesis; chorismate from D-erythrose 4-phosphate and phosphoenolpyruvate: step 3/7. Functionally, catalyzes a trans-dehydration via an enolate intermediate. The polypeptide is 3-dehydroquinate dehydratase (Polynucleobacter necessarius subsp. necessarius (strain STIR1)).